A 328-amino-acid polypeptide reads, in one-letter code: GMP reductase (328 aa).

Residue Cys177 is the Thioimidate intermediate of the active site. 206–229 contacts NADP(+); sequence IVADGGIRYNGDIAKSIRFGASMV.

The protein belongs to the IMPDH/GMPR family. GuaC type 2 subfamily.

The enzyme catalyses IMP + NH4(+) + NADP(+) = GMP + NADPH + 2 H(+). Catalyzes the irreversible NADPH-dependent deamination of GMP to IMP. It functions in the conversion of nucleobase, nucleoside and nucleotide derivatives of G to A nucleotides, and in maintaining the intracellular balance of A and G nucleotides. The protein is GMP reductase of Levilactobacillus brevis (strain ATCC 367 / BCRC 12310 / CIP 105137 / JCM 1170 / LMG 11437 / NCIMB 947 / NCTC 947) (Lactobacillus brevis).